Consider the following 354-residue polypeptide: DNA integrity scanning protein DisA (354 aa).

The 139-residue stretch at 6-144 (DDELKKILKI…GDIKYVLRDS (139 aa)) folds into the DAC domain. ATP contacts are provided by residues glycine 73, leucine 91, and 104-108 (TRHRT).

The protein belongs to the DisA family. In terms of assembly, homooctamer. It depends on Mg(2+) as a cofactor.

It carries out the reaction 2 ATP = 3',3'-c-di-AMP + 2 diphosphate. Its function is as follows. Participates in a DNA-damage check-point that is active prior to asymmetric division when DNA is damaged. DisA forms globular foci that rapidly scan along the chromosomes during sporulation, searching for lesions. When a lesion is present, DisA pauses at the lesion site. This triggers a cellular response that culminates in a temporary block in sporulation initiation. Functionally, also has diadenylate cyclase activity, catalyzing the condensation of 2 ATP molecules into cyclic di-AMP (c-di-AMP). c-di-AMP acts as a signaling molecule that couples DNA integrity with progression of sporulation. The rise in c-di-AMP level generated by DisA while scanning the chromosome, operates as a positive signal that advances sporulation; upon encountering a lesion, the DisA focus arrests at the damaged site and halts c-di-AMP synthesis. The protein is DNA integrity scanning protein DisA of Clostridium perfringens (strain 13 / Type A).